A 225-amino-acid polypeptide reads, in one-letter code: MOB-like protein phocein (225 aa).

Zn(2+) contacts are provided by Cys92, Cys97, Cys110, His113, Cys119, His127, His169, and His174.

Belongs to the MOB1/phocein family. Binds STRN4. Interacts with DNM1 and EPS15. Interacts with nucleoside diphosphate kinase. Interacts with CTTNBP2. Interacts with CTTNBP2NL. Part of the core of STRIPAK complexes composed of PP2A catalytic and scaffolding subunits, the striatins (PP2A regulatory subunits), the striatin-associated proteins MOB4, STRIP1 and STRIP2, PDCD10 and members of the STE20 kinases, such as STK24 and STK26. Post-translationally, phosphorylated on serine residues. As to expression, highly expressed in adrenal gland, spinal cord, brain and cerebellum. Detected at lower levels in heart and skeletal muscle, and at very low levels in spleen, liver and intestine.

It is found in the cytoplasm. The protein resides in the membrane. It localises to the golgi apparatus. The protein localises to the golgi stack membrane. Part of the striatin-interacting phosphatase and kinase (STRIPAK) complexes. STRIPAK complexes have critical roles in protein (de)phosphorylation and are regulators of multiple signaling pathways including Hippo, MAPK, nuclear receptor and cytoskeleton remodeling. Different types of STRIPAK complexes are involved in a variety of biological processes such as cell growth, differentiation, apoptosis, metabolism and immune regulation. In Rattus norvegicus (Rat), this protein is MOB-like protein phocein (Mob4).